The chain runs to 175 residues: Shikimate kinase (175 aa).

10 to 15 (GAGKTT) provides a ligand contact to ATP. Mg(2+) is bound at residue Thr-14. Residues Asp-32, Arg-56, and Gly-78 each contribute to the substrate site. Arg-116 is a binding site for ATP. Arg-135 contacts substrate.

This sequence belongs to the shikimate kinase family. Monomer. Requires Mg(2+) as cofactor.

The protein localises to the cytoplasm. It carries out the reaction shikimate + ATP = 3-phosphoshikimate + ADP + H(+). It participates in metabolic intermediate biosynthesis; chorismate biosynthesis; chorismate from D-erythrose 4-phosphate and phosphoenolpyruvate: step 5/7. Catalyzes the specific phosphorylation of the 3-hydroxyl group of shikimic acid using ATP as a cosubstrate. In Aromatoleum aromaticum (strain DSM 19018 / LMG 30748 / EbN1) (Azoarcus sp. (strain EbN1)), this protein is Shikimate kinase.